We begin with the raw amino-acid sequence, 287 residues long: Formamidopyrimidine-DNA glycosylase (287 aa).

The Schiff-base intermediate with DNA role is filled by P2. E3 serves as the catalytic Proton donor. The active-site Proton donor; for beta-elimination activity is K58. H104, R123, and R166 together coordinate DNA. An FPG-type zinc finger spans residues 251-287 (RVYDREGQPCPTPGCKGMIGREVQAGRSTFFCPVCQV). The active-site Proton donor; for delta-elimination activity is the R277.

This sequence belongs to the FPG family. As to quaternary structure, monomer. The cofactor is Zn(2+).

The enzyme catalyses Hydrolysis of DNA containing ring-opened 7-methylguanine residues, releasing 2,6-diamino-4-hydroxy-5-(N-methyl)formamidopyrimidine.. It carries out the reaction 2'-deoxyribonucleotide-(2'-deoxyribose 5'-phosphate)-2'-deoxyribonucleotide-DNA = a 3'-end 2'-deoxyribonucleotide-(2,3-dehydro-2,3-deoxyribose 5'-phosphate)-DNA + a 5'-end 5'-phospho-2'-deoxyribonucleoside-DNA + H(+). In terms of biological role, involved in base excision repair of DNA damaged by oxidation or by mutagenic agents. Acts as a DNA glycosylase that recognizes and removes damaged bases. Has a preference for oxidized purines, such as 7,8-dihydro-8-oxoguanine (8-oxoG). Has AP (apurinic/apyrimidinic) lyase activity and introduces nicks in the DNA strand. Cleaves the DNA backbone by beta-delta elimination to generate a single-strand break at the site of the removed base with both 3'- and 5'-phosphates. The protein is Formamidopyrimidine-DNA glycosylase of Caulobacter sp. (strain K31).